The primary structure comprises 352 residues: MDYQVSSPIYDIDYGPSEPCRKIDVKQMGAHLLPPLYSMVFLFGFVGNMLVVLILINCKRLKSMTDIYLLNLAISDLIFLFTVPFWAHYAAGQWDFGNTMCQFLTGLYFIGFFSGIFFIILLTIDRYLAIVHAVFALKARTVTFGVVTSVITWVVAVFASLPGIIFTRSQKEGYHYTCSPHFPFSQYQFWKNFETLKMVILGLVLPLLVMVICYSGILKTLLRCRNEKKRHRAVRLIFTIMIVYFLFWAPYNIVLLLNTYQEFFGLNNCSSSNRLDQAMQVTETLGMTHCCVNPIIYAFVGEKFRNYLKVFFQKHIAKCFCECCSIFQKEAPERANSVYTRSTGEQEISVGL.

Topologically, residues 1–30 are extracellular; sequence MDYQVSSPIYDIDYGPSEPCRKIDVKQMGA. Tyr-3 is subject to Sulfotyrosine. Ser-6 and Ser-7 each carry an O-linked (GalNAc...) serine glycan. Tyr-10 and Tyr-14 each carry sulfotyrosine. 2 cysteine pairs are disulfide-bonded: Cys-20–Cys-269 and Cys-101–Cys-178. A helical transmembrane segment spans residues 31-58; sequence HLLPPLYSMVFLFGFVGNMLVVLILINC. Residues 59 to 68 are Cytoplasmic-facing; sequence KRLKSMTDIY. The helical transmembrane segment at 69 to 89 threads the bilayer; that stretch reads LLNLAISDLIFLFTVPFWAHY. Over 90–102 the chain is Extracellular; sequence AAGQWDFGNTMCQ. A helical transmembrane segment spans residues 103–124; sequence FLTGLYFIGFFSGIFFIILLTI. Topologically, residues 125–141 are cytoplasmic; it reads DRYLAIVHAVFALKART. Residues 142–166 traverse the membrane as a helical segment; the sequence is VTFGVVTSVITWVVAVFASLPGIIF. The Extracellular segment spans residues 167 to 198; that stretch reads TRSQKEGYHYTCSPHFPFSQYQFWKNFETLKM. A helical transmembrane segment spans residues 199–218; that stretch reads VILGLVLPLLVMVICYSGIL. At 219–235 the chain is on the cytoplasmic side; the sequence is KTLLRCRNEKKRHRAVR. A helical membrane pass occupies residues 236-260; sequence LIFTIMIVYFLFWAPYNIVLLLNTY. Residues 261–277 lie on the Extracellular side of the membrane; that stretch reads QEFFGLNNCSSSNRLDQ. Residues 278–301 form a helical membrane-spanning segment; it reads AMQVTETLGMTHCCVNPIIYAFVG. The Cytoplasmic portion of the chain corresponds to 302-352; the sequence is EKFRNYLKVFFQKHIAKCFCECCSIFQKEAPERANSVYTRSTGEQEISVGL. 3 S-palmitoyl cysteine lipidation sites follow: Cys-321, Cys-323, and Cys-324. Residues Ser-337, Ser-342, and Ser-349 each carry the phosphoserine; by BARK1 modification.

This sequence belongs to the G-protein coupled receptor 1 family. In terms of assembly, interacts with PRAF2. Efficient ligand binding to CCL3/MIP-1alpha and CCL4/MIP-1beta requires sulfation, O-glycosylation and sialic acid modifications. Glycosylation on Ser-6 is required for efficient binding of CCL4. Interacts with GRK2. Interacts with ARRB1 and ARRB2. Interacts with CNIH4. Interacts with S100A4; this interaction stimulates T-lymphocyte chemotaxis. In terms of processing, sulfated on at least 2 of the N-terminal tyrosines. Sulfation is required for efficient binding of the chemokines, CCL3 and CCL4. Palmitoylation in the C-terminal is important for cell surface expression. Post-translationally, phosphorylation on serine residues in the C-terminal is stimulated by binding CC chemokines especially by APO-RANTES. In terms of processing, O-glycosylated, but not N-glycosylated. Ser-6 appears to be the major site even if Ser-7 may be also O-glycosylated. Also sialylated glycans present which contribute to chemokine binding. Ser-17 may also be glycosylated and, if so, with small moieties such as a T-antigen.

It is found in the cell membrane. Its function is as follows. Receptor for a number of inflammatory CC-chemokines including CCL3/MIP-1-alpha, CCL4/MIP-1-beta and RANTES and subsequently transduces a signal by increasing the intracellular calcium ion level. May play a role in the control of granulocytic lineage proliferation or differentiation. Participates in T-lymphocyte migration to the infection site by acting as a chemotactic receptor. This chain is C-C chemokine receptor type 5 (CCR5), found in Mico humeralifer (Black and white tassel-ear marmoset).